The chain runs to 312 residues: Light-independent protochlorophyllide reductase iron-sulfur ATP-binding protein (312 aa).

Residues 55 to 60 (GIGKST) and Lys-84 each bind ATP. Residue Ser-59 coordinates Mg(2+). [4Fe-4S] cluster contacts are provided by Cys-140 and Cys-174. ATP contacts are provided by residues 225–226 (NR) and 249–251 (PDL).

It belongs to the NifH/BchL/ChlL family. As to quaternary structure, homodimer. Protochlorophyllide reductase is composed of three subunits; BchL, BchN and BchB. [4Fe-4S] cluster serves as cofactor.

It carries out the reaction chlorophyllide a + oxidized 2[4Fe-4S]-[ferredoxin] + 2 ADP + 2 phosphate = protochlorophyllide a + reduced 2[4Fe-4S]-[ferredoxin] + 2 ATP + 2 H2O. The protein operates within porphyrin-containing compound metabolism; bacteriochlorophyll biosynthesis (light-independent). In terms of biological role, component of the dark-operative protochlorophyllide reductase (DPOR) that uses Mg-ATP and reduced ferredoxin to reduce ring D of protochlorophyllide (Pchlide) to form chlorophyllide a (Chlide). This reaction is light-independent. The L component serves as a unique electron donor to the NB-component of the complex, and binds Mg-ATP. This Rhodopseudomonas palustris (strain BisB18) protein is Light-independent protochlorophyllide reductase iron-sulfur ATP-binding protein.